An 800-amino-acid polypeptide reads, in one-letter code: Elongation factor G, mitochondrial (800 aa).

The transit peptide at 1 to 59 directs the protein to the mitochondrion; the sequence is MRVIRAVATLHAGRAAAVRQGVRSVSLGACRAAVETPSLRSAGSQFESRRLFSRSSYLR. A tr-type G domain is found at 99–385; sequence ARVRNIGIAA…AVCDYLPNPN (287 aa). GTP-binding positions include 108-115, 183-187, and 237-240; these read AHIDSGKT, DTPGH, and NKMD.

It belongs to the TRAFAC class translation factor GTPase superfamily. Classic translation factor GTPase family. EF-G/EF-2 subfamily.

It is found in the mitochondrion. It participates in protein biosynthesis; polypeptide chain elongation. Mitochondrial GTPase that catalyzes the GTP-dependent ribosomal translocation step during translation elongation. During this step, the ribosome changes from the pre-translocational (PRE) to the post-translocational (POST) state as the newly formed A-site-bound peptidyl-tRNA and P-site-bound deacylated tRNA move to the P and E sites, respectively. Catalyzes the coordinated movement of the two tRNA molecules, the mRNA and conformational changes in the ribosome. In Neurospora crassa (strain ATCC 24698 / 74-OR23-1A / CBS 708.71 / DSM 1257 / FGSC 987), this protein is Elongation factor G, mitochondrial (mef1).